The primary structure comprises 149 residues: Alpha-crystallin A chain (149 aa).

Residues 41–149 (LFRSVLESGI…DASHGERPIP (109 aa)) form the sHSP domain. 4 residues coordinate Zn(2+): histidine 89, glutamate 91, histidine 96, and histidine 143.

Belongs to the small heat shock protein (HSP20) family. As to quaternary structure, heteropolymer composed of three CRYAA and one CRYAB subunits. Inter-subunit bridging via zinc ions enhances stability, which is crucial as there is no protein turn over in the lens. Can also form homodimers and homotetramers (dimers of dimers) which serve as the building blocks of homooligomers. Within homooligomers, the zinc-binding motif is created from residues of 3 different molecules. His-89 and Glu-91 from one molecule are ligands of the zinc ion, and His-96 and His-143 residues from additional molecules complete the site with tetrahedral coordination geometry. Part of a complex required for lens intermediate filament formation composed of BFSP1, BFSP2 and CRYAA.

It is found in the cytoplasm. The protein resides in the nucleus. Contributes to the transparency and refractive index of the lens. May act as a chaperone, preventing aggregation of various proteins under a wide range of stress conditions. This is Alpha-crystallin A chain (CRYAA) from Columba livia (Rock dove).